The primary structure comprises 215 residues: Large ribosomal subunit protein uL3 (215 aa).

A disordered region spans residues 136-155; the sequence is GVSISHRSHGSTGQRQDPGK. An N5-methylglutamine modification is found at Q151.

It belongs to the universal ribosomal protein uL3 family. Part of the 50S ribosomal subunit. Forms a cluster with proteins L14 and L19. Post-translationally, methylated by PrmB.

In terms of biological role, one of the primary rRNA binding proteins, it binds directly near the 3'-end of the 23S rRNA, where it nucleates assembly of the 50S subunit. This is Large ribosomal subunit protein uL3 from Rickettsia africae (strain ESF-5).